The following is a 1095-amino-acid chain: Formin-like protein 2 (1095 aa).

A GBD/FH3 domain is found at 23-469 (LPMPEPGELE…EAIQRQSTLE (447 aa)). A coiled-coil region spans residues 381 to 478 (LLEDAETKNA…EKKIHELEKQ (98 aa)). A disordered region spans residues 521 to 602 (PSSGPLPPPP…PSAPPLPGTS (82 aa)). Composition is skewed to pro residues over residues 524–534 (GPLPPPPPPLP), 548–576 (ATPP…PLPG), and 583–599 (PAPP…PPLP). Residues 617–1008 (IKKPIKTKFR…LMEKLLEQEA (392 aa)) form the FH2 domain.

Belongs to the formin homology family. As to quaternary structure, interacts with TCP11L2; this interaction promotes muscle-derived satellite cell (MDSC) migration and differentiation.

Its subcellular location is the cytoplasm. Its function is as follows. Plays a role in the regulation of cell morphology and cytoskeletal organization. Required in the cortical actin filament dynamics. The sequence is that of Formin-like protein 2 from Bos taurus (Bovine).